A 375-amino-acid polypeptide reads, in one-letter code: 23S rRNA (uracil(747)-C(5))-methyltransferase RlmC (375 aa).

Positions 3, 11, 14, and 87 each coordinate [4Fe-4S] cluster. 4 residues coordinate S-adenosyl-L-methionine: Gln-212, Phe-241, Glu-262, and Asn-307. Cys-334 (nucleophile) is an active-site residue.

The protein belongs to the class I-like SAM-binding methyltransferase superfamily. RNA M5U methyltransferase family. RlmC subfamily.

The catalysed reaction is uridine(747) in 23S rRNA + S-adenosyl-L-methionine = 5-methyluridine(747) in 23S rRNA + S-adenosyl-L-homocysteine + H(+). Catalyzes the formation of 5-methyl-uridine at position 747 (m5U747) in 23S rRNA. This is 23S rRNA (uracil(747)-C(5))-methyltransferase RlmC from Shigella sonnei (strain Ss046).